Here is a 307-residue protein sequence, read N- to C-terminus: MSENQQALNHVVSMEDLTVDQVMKLIKRGIEFKNGAQLPYEDHPIVSNLFFEDSTRTHKSFEVAEIKLGLERLDFDVKTSSVNKGETLYDTILTLSALGVDVCVIRHPEVDYYRELIASPTITTSIINGGDGSGQHPSQSLLDLMTIYEEFGHFEGLKVAIAGDLDHSRVAKSNMQILKRLGAELFFAGPEEWRSQEFADYGQFVTIDEIIDQVDVMMFLRVQHERHDSGAVFSKEDYHAQHGLTQERYDRLKETAILMHPAPINRDVEIADHLVEAPKSRIVQQMTNGVFVRMAILESVLASRNAN.

Carbamoyl phosphate-binding residues include R56 and T57. K84 lines the L-aspartate pocket. Carbamoyl phosphate contacts are provided by R106, H136, and Q139. Residues R169 and R221 each contribute to the L-aspartate site. A262 and P263 together coordinate carbamoyl phosphate.

This sequence belongs to the aspartate/ornithine carbamoyltransferase superfamily. ATCase family. In terms of assembly, heterododecamer (2C3:3R2) of six catalytic PyrB chains organized as two trimers (C3), and six regulatory PyrI chains organized as three dimers (R2).

It carries out the reaction carbamoyl phosphate + L-aspartate = N-carbamoyl-L-aspartate + phosphate + H(+). The protein operates within pyrimidine metabolism; UMP biosynthesis via de novo pathway; (S)-dihydroorotate from bicarbonate: step 2/3. Its function is as follows. Catalyzes the condensation of carbamoyl phosphate and aspartate to form carbamoyl aspartate and inorganic phosphate, the committed step in the de novo pyrimidine nucleotide biosynthesis pathway. The chain is Aspartate carbamoyltransferase catalytic subunit from Streptococcus pneumoniae (strain JJA).